A 213-amino-acid chain; its full sequence is Putative transmembrane protein DDB_G0267860 (213 aa).

A signal peptide spans 1 to 22 (MKTKILLLNFIIIFFLINVNLA). The Extracellular segment spans residues 23–191 (IKKDSPFKEI…SSKFDSSTSS (169 aa)). N-linked (GlcNAc...) asparagine glycosylation is found at Asn-92 and Asn-114. Residues 192–212 (ISINTLAILSLLFLIFINKLI) form a helical membrane-spanning segment. Position 213 (Asn-213) is a topological domain, cytoplasmic.

It is found in the membrane. In Dictyostelium discoideum (Social amoeba), this protein is Putative transmembrane protein DDB_G0267860.